A 366-amino-acid chain; its full sequence is Beta sliding clamp (366 aa).

This sequence belongs to the beta sliding clamp family. As to quaternary structure, forms a ring-shaped head-to-tail homodimer around DNA which binds and tethers DNA polymerases and other proteins to the DNA. The DNA replisome complex has a single clamp-loading complex (3 tau and 1 each of delta, delta', psi and chi subunits) which binds 3 Pol III cores (1 core on the leading strand and 2 on the lagging strand) each with a beta sliding clamp dimer. Additional proteins in the replisome are other copies of gamma, psi and chi, Ssb, DNA helicase and RNA primase.

It localises to the cytoplasm. In terms of biological role, confers DNA tethering and processivity to DNA polymerases and other proteins. Acts as a clamp, forming a ring around DNA (a reaction catalyzed by the clamp-loading complex) which diffuses in an ATP-independent manner freely and bidirectionally along dsDNA. Initially characterized for its ability to contact the catalytic subunit of DNA polymerase III (Pol III), a complex, multichain enzyme responsible for most of the replicative synthesis in bacteria; Pol III exhibits 3'-5' exonuclease proofreading activity. The beta chain is required for initiation of replication as well as for processivity of DNA replication. The protein is Beta sliding clamp (dnaN) of Buchnera aphidicola subsp. Rhopalosiphum padi.